A 202-amino-acid chain; its full sequence is Protein-methionine-sulfoxide reductase heme-binding subunit MsrQ (202 aa).

A run of 6 helical transmembrane segments spans residues Tyr8 to Trp28, Leu50 to Trp70, Ile76 to Leu96, Pro114 to Gly134, Leu148 to Val168, and Gly174 to Ala194.

The protein belongs to the MsrQ family. In terms of assembly, heterodimer of a catalytic subunit (MsrP) and a heme-binding subunit (MsrQ). FMN serves as cofactor. It depends on heme b as a cofactor.

The protein localises to the cell membrane. In terms of biological role, part of the MsrPQ system that repairs oxidized cell envelope proteins containing methionine sulfoxide residues (Met-O), using respiratory chain electrons. Thus protects these proteins from oxidative-stress damage caused by reactive species of oxygen and chlorine. MsrPQ is essential for the maintenance of envelope integrity under bleach stress, rescuing a wide series of structurally unrelated cell envelope proteins from methionine oxidation. MsrQ provides electrons for reduction to the reductase catalytic subunit MsrP, using the quinone pool of the respiratory chain. This is Protein-methionine-sulfoxide reductase heme-binding subunit MsrQ from Deinococcus radiodurans (strain ATCC 13939 / DSM 20539 / JCM 16871 / CCUG 27074 / LMG 4051 / NBRC 15346 / NCIMB 9279 / VKM B-1422 / R1).